Reading from the N-terminus, the 311-residue chain is Probable manganese-dependent inorganic pyrophosphatase (311 aa).

6 residues coordinate Mn(2+): His-9, Asp-13, Asp-15, Asp-75, His-97, and Asp-149.

This sequence belongs to the PPase class C family. Mn(2+) serves as cofactor.

Its subcellular location is the cytoplasm. It carries out the reaction diphosphate + H2O = 2 phosphate + H(+). The protein is Probable manganese-dependent inorganic pyrophosphatase of Shouchella clausii (strain KSM-K16) (Alkalihalobacillus clausii).